Consider the following 185-residue polypeptide: MKTAQELRVGNVVQIGSDAWVIAKTEYNKSGRNAAVVKMKMKNLLTNAGQESVYKADDKFDVVMLDRKEVTYSYFADPMYVFMDADYNQYEVEAEMMGEALNYLEDGMACEVVFYNEKAISVELPTILVREITYTEPAVKGDTSSGKVLKNAKLATGFELQVPLFCSTGDKIEIDTRTNEYRSRA.

Belongs to the elongation factor P family.

It localises to the cytoplasm. The protein operates within protein biosynthesis; polypeptide chain elongation. Functionally, involved in peptide bond synthesis. Stimulates efficient translation and peptide-bond synthesis on native or reconstituted 70S ribosomes in vitro. Probably functions indirectly by altering the affinity of the ribosome for aminoacyl-tRNA, thus increasing their reactivity as acceptors for peptidyl transferase. The polypeptide is Elongation factor P (Burkholderia ambifaria (strain MC40-6)).